The chain runs to 466 residues: Uronate isomerase (466 aa).

This sequence belongs to the metallo-dependent hydrolases superfamily. Uronate isomerase family.

The enzyme catalyses D-glucuronate = D-fructuronate. It carries out the reaction aldehydo-D-galacturonate = keto-D-tagaturonate. The protein operates within carbohydrate metabolism; pentose and glucuronate interconversion. In Brucella canis (strain ATCC 23365 / NCTC 10854 / RM-666), this protein is Uronate isomerase.